We begin with the raw amino-acid sequence, 212 residues long: MNIFRFLGDISHLSAILILLLKIWKSRSCAGISGKSQLLFAIVFTTRYLDLFTNFISLYNTSMKMVYVASSYATIWMIYSKFKATYDGNHDTFRVEFLIVPTAILAFLVNHDFTPLEILWTFSIYLESVAILPQLFMVSKTGEAETITSHYLFALGIYRALYLFNWIWRYQFEGFFDLIAIVAGLVQTVLYCDFFYLYITKVLKGKKLSLPA.

At 1–4 the chain is on the lumenal side; it reads MNIF. The chain crosses the membrane as a helical span at residues 5-24; sequence RFLGDISHLSAILILLLKIW. Residues 25-32 lie on the Cytoplasmic side of the membrane; that stretch reads KSRSCAGI. A helical membrane pass occupies residues 33 to 52; sequence SGKSQLLFAIVFTTRYLDLF. The interaction with the K-D-E-L motif on target proteins stretch occupies residues 47–48; it reads RY. Residues 53 to 58 are Lumenal-facing; sequence TNFISL. The helical transmembrane segment at 59 to 79 threads the bilayer; that stretch reads YNTSMKMVYVASSYATIWMIY. Residues 80–92 lie on the Cytoplasmic side of the membrane; sequence SKFKATYDGNHDT. The chain crosses the membrane as a helical span at residues 93 to 110; the sequence is FRVEFLIVPTAILAFLVN. At 111–116 the chain is on the lumenal side; that stretch reads HDFTPL. The chain crosses the membrane as a helical span at residues 117–135; it reads EILWTFSIYLESVAILPQL. The Cytoplasmic segment spans residues 136–149; that stretch reads FMVSKTGEAETITS. The helical transmembrane segment at 150–168 threads the bilayer; the sequence is HYLFALGIYRALYLFNWIW. Positions 159-169 are interaction with the K-D-E-L motif on target proteins; it reads RALYLFNWIWR. Residues 169–178 are Lumenal-facing; sequence RYQFEGFFDL. A helical membrane pass occupies residues 179-199; that stretch reads IAIVAGLVQTVLYCDFFYLYI. Topologically, residues 200–212 are cytoplasmic; that stretch reads TKVLKGKKLSLPA. The important for recycling of cargo proteins with the sequence motif K-D-E-L from the Golgi to the endoplasmic reticulum stretch occupies residues 204–207; the sequence is KGKK.

It belongs to the ERD2 family.

It localises to the golgi apparatus membrane. The protein localises to the cytoplasmic vesicle. It is found in the COPI-coated vesicle membrane. Its subcellular location is the endoplasmic reticulum membrane. The protein resides in the endoplasmic reticulum-Golgi intermediate compartment membrane. Functionally, receptor for the C-terminal sequence motif K-D-E-L that is present on endoplasmic reticulum resident proteins and that mediates their recycling from the Golgi back to the endoplasmic reticulum. This chain is ER lumen protein-retaining receptor 1 (kdelr1), found in Xenopus tropicalis (Western clawed frog).